A 55-amino-acid chain; its full sequence is Large ribosomal subunit protein bL33A (55 aa).

It belongs to the bacterial ribosomal protein bL33 family.

The chain is Large ribosomal subunit protein bL33A from Mycobacterium ulcerans (strain Agy99).